The sequence spans 108 residues: DNA-binding protein HBbu (108 aa).

The protein belongs to the bacterial histone-like protein family.

Histone-like DNA-binding protein which is capable of wrapping DNA to stabilize it, and thus to prevent its denaturation under extreme environmental conditions. The sequence is that of DNA-binding protein HBbu (hbb) from Borrelia andersonii (Borreliella andersonii).